Here is a 206-residue protein sequence, read N- to C-terminus: Uridine kinase (206 aa).

9–16 is a binding site for ATP; the sequence is GGSGSGKT.

It belongs to the uridine kinase family.

It is found in the cytoplasm. It carries out the reaction uridine + ATP = UMP + ADP + H(+). It catalyses the reaction cytidine + ATP = CMP + ADP + H(+). Its pathway is pyrimidine metabolism; CTP biosynthesis via salvage pathway; CTP from cytidine: step 1/3. The protein operates within pyrimidine metabolism; UMP biosynthesis via salvage pathway; UMP from uridine: step 1/1. The chain is Uridine kinase from Borrelia turicatae (strain 91E135).